The chain runs to 53 residues: Large ribosomal subunit protein eL40 (53 aa).

It belongs to the eukaryotic ribosomal protein eL40 family.

The chain is Large ribosomal subunit protein eL40 from Pyrobaculum islandicum (strain DSM 4184 / JCM 9189 / GEO3).